We begin with the raw amino-acid sequence, 370 residues long: MAKLSLKNIAKRYPGAERRVLEEISAEIADGEFVVIVGPSGCGKSTLLRMVAGLESTEDGEIRIGERLVNQLEPKDRDIAMVFQNYALYPHMTVAENMGYALKLKGLKKVEIMERVLKVAAVLELEQLLQRKPRELSGGQRQRVAMGRAIVREPAVFLFDEPLSNLDAKLRGQMRLEIQRLHRRLATTSLYVTHDQVEAMTLADRVIVLNKGHIEQIGAPDEIYDRPATAFVAAFMGSPGMNLFDAQADESGERLLLGDGVSLALPAANPALAGRRLKAGIRPEHLRAAGEGGETLSLRVDSLEMLGADNYVYGLLAGQNVVARLAHGHRPEPGSRLEVAVRAESLHLFDAETQRRIEHAAASQASLAVS.

The region spanning Leu-4 to Met-236 is the ABC transporter domain. Gly-38–Ser-45 contributes to the ATP binding site.

The protein belongs to the ABC transporter superfamily. sn-glycerol-3-phosphate importer (TC 3.A.1.1.3) family. The complex is composed of two ATP-binding proteins (UgpC), two transmembrane proteins (UgpA and UgpE) and a solute-binding protein (UgpB).

The protein resides in the cell inner membrane. It catalyses the reaction sn-glycerol 3-phosphate(out) + ATP + H2O = sn-glycerol 3-phosphate(in) + ADP + phosphate + H(+). Part of the ABC transporter complex UgpBAEC involved in sn-glycerol-3-phosphate (G3P) import. Responsible for energy coupling to the transport system. The sequence is that of sn-glycerol-3-phosphate import ATP-binding protein UgpC from Chromobacterium violaceum (strain ATCC 12472 / DSM 30191 / JCM 1249 / CCUG 213 / NBRC 12614 / NCIMB 9131 / NCTC 9757 / MK).